An 828-amino-acid chain; its full sequence is Periplasmic nitrate reductase (828 aa).

Positions 1–31 form a signal peptide, tat-type signal; it reads MKLSRRSFMKANAVAAAAAAAGLSVPGVARA. One can recognise a 4Fe-4S Mo/W bis-MGD-type domain in the interval 39–95; the sequence is IKWDKAPCRFCGTGCGVLVGTQQGRVVACQGDPDAPVNRGLNCIKGYFLPKIMYGKD. Residues Cys-46, Cys-49, Cys-53, and Cys-81 each coordinate [4Fe-4S] cluster. Mo-bis(molybdopterin guanine dinucleotide) contacts are provided by residues Lys-83, Gln-150, Asn-175, Cys-179, 212–219, 243–247, 262–264, Met-372, Gln-376, Asn-482, 508–509, Lys-531, Asp-558, and 718–727; these read WGANMAEM, STYQH, QSD, SD, and TGRVLEHWHT. Position 794 (Phe-794) interacts with substrate. Residues Asn-802 and Lys-819 each coordinate Mo-bis(molybdopterin guanine dinucleotide).

It belongs to the prokaryotic molybdopterin-containing oxidoreductase family. NasA/NapA/NarB subfamily. Component of the periplasmic nitrate reductase NapAB complex composed of NapA and NapB. Requires [4Fe-4S] cluster as cofactor. Mo-bis(molybdopterin guanine dinucleotide) is required as a cofactor. In terms of processing, predicted to be exported by the Tat system. The position of the signal peptide cleavage has not been experimentally proven.

It localises to the periplasm. It carries out the reaction 2 Fe(II)-[cytochrome] + nitrate + 2 H(+) = 2 Fe(III)-[cytochrome] + nitrite + H2O. In terms of biological role, catalytic subunit of the periplasmic nitrate reductase complex NapAB. Receives electrons from NapB and catalyzes the reduction of nitrate to nitrite. This chain is Periplasmic nitrate reductase, found in Shigella flexneri.